The primary structure comprises 292 residues: ATP phosphoribosyltransferase (292 aa).

This sequence belongs to the ATP phosphoribosyltransferase family. Long subfamily. Requires Mg(2+) as cofactor.

Its subcellular location is the cytoplasm. The enzyme catalyses 1-(5-phospho-beta-D-ribosyl)-ATP + diphosphate = 5-phospho-alpha-D-ribose 1-diphosphate + ATP. Its pathway is amino-acid biosynthesis; L-histidine biosynthesis; L-histidine from 5-phospho-alpha-D-ribose 1-diphosphate: step 1/9. Its activity is regulated as follows. Feedback inhibited by histidine. Catalyzes the condensation of ATP and 5-phosphoribose 1-diphosphate to form N'-(5'-phosphoribosyl)-ATP (PR-ATP). Has a crucial role in the pathway because the rate of histidine biosynthesis seems to be controlled primarily by regulation of HisG enzymatic activity. The sequence is that of ATP phosphoribosyltransferase from Desulfatibacillum aliphaticivorans.